We begin with the raw amino-acid sequence, 460 residues long: Alpha-amylase (460 aa).

An N-terminal signal peptide occupies residues 1 to 21; the sequence is MASRTLSGALALAAAATAVLA. Asparagine 121, glutamine 167, and aspartate 176 together coordinate Ca(2+). Aspartate 206 functions as the Nucleophile in the catalytic mechanism. Residue histidine 210 coordinates Ca(2+). The active-site Proton donor is glutamate 233.

This sequence belongs to the glycosyl hydrolase 13 family. In terms of assembly, monomer. Ca(2+) serves as cofactor.

The enzyme catalyses Endohydrolysis of (1-&gt;4)-alpha-D-glucosidic linkages in polysaccharides containing three or more (1-&gt;4)-alpha-linked D-glucose units.. The sequence is that of Alpha-amylase (amy) from Streptomyces thermoviolaceus.